Consider the following 104-residue polypeptide: Large ribosomal subunit protein uL24 (104 aa).

This sequence belongs to the universal ribosomal protein uL24 family. In terms of assembly, part of the 50S ribosomal subunit.

In terms of biological role, one of two assembly initiator proteins, it binds directly to the 5'-end of the 23S rRNA, where it nucleates assembly of the 50S subunit. One of the proteins that surrounds the polypeptide exit tunnel on the outside of the subunit. This Bartonella henselae (strain ATCC 49882 / DSM 28221 / CCUG 30454 / Houston 1) (Rochalimaea henselae) protein is Large ribosomal subunit protein uL24.